Reading from the N-terminus, the 131-residue chain is Putative gene 51 protein (131 aa).

The chain is Putative gene 51 protein (51) from Bacillus phage SP01 (Bacteriophage SP01).